A 293-amino-acid polypeptide reads, in one-letter code: 4-hydroxy-tetrahydrodipicolinate synthase (293 aa).

T44 contacts pyruvate. The Proton donor/acceptor role is filled by Y132. K161 acts as the Schiff-base intermediate with substrate in catalysis. I203 is a pyruvate binding site.

This sequence belongs to the DapA family. Homotetramer; dimer of dimers.

Its subcellular location is the cytoplasm. The catalysed reaction is L-aspartate 4-semialdehyde + pyruvate = (2S,4S)-4-hydroxy-2,3,4,5-tetrahydrodipicolinate + H2O + H(+). The protein operates within amino-acid biosynthesis; L-lysine biosynthesis via DAP pathway; (S)-tetrahydrodipicolinate from L-aspartate: step 3/4. Its function is as follows. Catalyzes the condensation of (S)-aspartate-beta-semialdehyde [(S)-ASA] and pyruvate to 4-hydroxy-tetrahydrodipicolinate (HTPA). This chain is 4-hydroxy-tetrahydrodipicolinate synthase, found in Persephonella marina (strain DSM 14350 / EX-H1).